We begin with the raw amino-acid sequence, 359 residues long: Archaemetzincin-2 (359 aa).

H254 provides a ligand contact to Zn(2+). Residue E255 is the Proton acceptor of the active site. Positions 258, 264, 265, 270, 289, and 292 each coordinate Zn(2+).

The protein belongs to the peptidase M54 family. Zn(2+) serves as cofactor. Predominantly expressed in testis.

Functionally, probable zinc metalloprotease. In Mus musculus (Mouse), this protein is Archaemetzincin-2 (Amz2).